A 395-amino-acid polypeptide reads, in one-letter code: Elongation factor Tu (395 aa).

Residues 10-204 (KPHVNIGTIG…AVDEYIPTPQ (195 aa)) form the tr-type G domain. A G1 region spans residues 19-26 (GHVDHGKT). Position 19 to 26 (19 to 26 (GHVDHGKT)) interacts with GTP. Residue Thr26 coordinates Mg(2+). Positions 60-64 (GITIS) are G2. Positions 81–84 (DCPG) are G3. GTP-binding positions include 81–85 (DCPGH) and 136–139 (NKCD). The interval 136 to 139 (NKCD) is G4. Residues 174–176 (SAL) form a G5 region.

The protein belongs to the TRAFAC class translation factor GTPase superfamily. Classic translation factor GTPase family. EF-Tu/EF-1A subfamily. In terms of assembly, monomer.

It localises to the cytoplasm. It carries out the reaction GTP + H2O = GDP + phosphate + H(+). Functionally, GTP hydrolase that promotes the GTP-dependent binding of aminoacyl-tRNA to the A-site of ribosomes during protein biosynthesis. In Anoxybacillus flavithermus (strain DSM 21510 / WK1), this protein is Elongation factor Tu.